The chain runs to 146 residues: MKKVLLVNGPNLNRLGVREVNVYGKGTLETLETDMKQEAEKLGVGLECFQSNHEGALIDTIHEADGIYEGIILNPGAFTHYSYAIRDAIASISIPVIEVHISNIHQRESFRHESVTAAVCAGQIVGFGFYGYKLALFALLEKLGEA.

Tyr-23 functions as the Proton acceptor in the catalytic mechanism. Substrate-binding residues include Asn-74, His-80, and Asp-87. His-100 acts as the Proton donor in catalysis. Substrate contacts are provided by residues Ile-101–Ser-102 and Arg-111.

It belongs to the type-II 3-dehydroquinase family. Homododecamer.

It carries out the reaction 3-dehydroquinate = 3-dehydroshikimate + H2O. It participates in metabolic intermediate biosynthesis; chorismate biosynthesis; chorismate from D-erythrose 4-phosphate and phosphoenolpyruvate: step 3/7. Functionally, catalyzes a trans-dehydration via an enolate intermediate. This Bacillus cytotoxicus (strain DSM 22905 / CIP 110041 / 391-98 / NVH 391-98) protein is 3-dehydroquinate dehydratase.